The following is a 432-amino-acid chain: Luc7-like protein 3 (432 aa).

Met-1 carries the post-translational modification N-acetylmethionine. 3 positions are modified to phosphoserine: Ser-3, Ser-110, and Ser-115. A coiled-coil region spans residues 124–181 (KNEEKIQVLTDKIDVLLQQIEELGSEGKVEEAQGMMKLVEQLKEERELLRSTTSTIES). Lys-231 bears the N6-acetyllysine mark. Residues 234–287 (LRKRTEEPDRDERLKKEKQEREEREKEREREREERERKRRREEEEREKERARDR) are compositionally biased toward basic and acidic residues. A disordered region spans residues 234–432 (LRKRTEEPDR…IKSEGDTQSN (199 aa)). Residues 288 to 301 (ERRKRSRSRSRHSS) are compositionally biased toward basic residues. Positions 302–311 (RTSDRRCSRS) are enriched in basic and acidic residues. Residues 312–367 (RDHKRSRSRDRRRSRSRDRRRSRSHDRSERKHRSRSRDRRRSKSRDRKSYKHRSKS) are compositionally biased toward basic residues. Residues 368–414 (RDREQDRKSKEKEKKGSDDKKSSVKSSSREKQSEDTNPESKESDTKN) show a composition bias toward basic and acidic residues. Ser-420 is modified (phosphoserine). Residues 421 to 432 (EDIKSEGDTQSN) are compositionally biased toward basic and acidic residues. Lys-424 participates in a covalent cross-link: Glycyl lysine isopeptide (Lys-Gly) (interchain with G-Cter in SUMO1); alternate. Lys-424 participates in a covalent cross-link: Glycyl lysine isopeptide (Lys-Gly) (interchain with G-Cter in SUMO2); alternate. Ser-425 and Ser-431 each carry phosphoserine.

This sequence belongs to the Luc7 family. As to quaternary structure, may interact with SFRS1 and form homodimers. Interacts with JMJD6. Interacts with RBM25. Interacts with RSRC1 (via Arg/Ser-rich domain). Interacts with RRP1B.

It is found in the nucleus speckle. Its function is as follows. Binds cAMP regulatory element DNA sequence. May play a role in RNA splicing. The sequence is that of Luc7-like protein 3 (Luc7l3) from Mus musculus (Mouse).